The chain runs to 325 residues: Phosphate acyltransferase (325 aa).

Belongs to the PlsX family. In terms of assembly, homodimer. Probably interacts with PlsY.

It localises to the cytoplasm. The enzyme catalyses a fatty acyl-[ACP] + phosphate = an acyl phosphate + holo-[ACP]. It participates in lipid metabolism; phospholipid metabolism. Functionally, catalyzes the reversible formation of acyl-phosphate (acyl-PO(4)) from acyl-[acyl-carrier-protein] (acyl-ACP). This enzyme utilizes acyl-ACP as fatty acyl donor, but not acyl-CoA. In Staphylococcus epidermidis (strain ATCC 35984 / DSM 28319 / BCRC 17069 / CCUG 31568 / BM 3577 / RP62A), this protein is Phosphate acyltransferase.